Consider the following 125-residue polypeptide: Fluoride-specific ion channel FluC (125 aa).

The next 4 membrane-spanning stretches (helical) occupy residues 6–26, 36–56, 68–88, and 97–117; these read AWIALAGAGGTLSRYALSGLV, WGTWVVNGLGCFLFGMIWALA, FIVLTGFMGAFTTFSTFAFEA, and WLLAAIHLIGQNSLGLVCVFL. Na(+) is bound by residues Gly76 and Thr79.

Belongs to the fluoride channel Fluc/FEX (TC 1.A.43) family.

It localises to the cell inner membrane. It catalyses the reaction fluoride(in) = fluoride(out). Its activity is regulated as follows. Na(+) is not transported, but it plays an essential structural role and its presence is essential for fluoride channel function. Fluoride-specific ion channel. Important for reducing fluoride concentration in the cell, thus reducing its toxicity. This is Fluoride-specific ion channel FluC from Nitrosococcus oceani (strain ATCC 19707 / BCRC 17464 / JCM 30415 / NCIMB 11848 / C-107).